The sequence spans 912 residues: MAGKARVHELAKELGVTSKEVLARLSDQGEFVKSASSTVEAPVARRLRESFGGGDKPAPAASNGAAAEAAAPPKKAGPKPGAPKPAPKKVAEPVVEAPVAPEPPAAPAAPAAPAPKPSPAARPAAAEAAAPAPAPAPAPRPGATPGPKPGAPRVPRVGNNPFSSAQPAERPAPRPQAPRPGAPRPGGASPSNMPPRPSPGSMGPRPPRPGGGPRPGGGPRPGGAGRPGGGGGGNYRGGGTGTGAPAGGPPGAGGGFRGRPGGGGGGGRPGQRGGAAGAFGRPGGAPKRGRKSKRAKRAEYENMQAPVVGGVRLPHGNGEVIRLARGASLSDFAEKIDANPASLVQALFNLGEMVTATQSVGDETLELLGGEMNYVVQVVSPEDEDRELLESFDLTYGEDEGGEEDLRTRPPVVTVMGHVDHGKTRLLDTIRKANVREGEAGGITQHIGAYQVAVEHDGTERPITFIDTPGHEAFTAMRARGAKATDIAILVVAADDGVMPQTVEAINHAQAADVPIVVAVNKIDKEGADPAKIRAQLTEYNLVAEDFGGDTMFVDISARQGTNIEQLLEAVLLTADAALDLRANPDMEAQGVAIEAHLDRGRGPVATVLIQRGTLRVGDSIVAGDAYGRVRRMVDEHGEDVEEALPSRPVQVIGFTSVPGAGDNLLVVDEDRIARQIADRRSARKRNALAARSRKRISLDDLDAALKETSQLNLILKGDNAGTVEALEEALLGIAIDDEVQLRVIDRGVGGVTETNVNLASASDAIIIGFNVRAEGKATELANREGVDIRYYSVIYQAIDEIESALKGMLKPVYEEVELGRAEIRAMFRSSKVGNIAGCLVTSGIIRRNAKARLLRDNIVVAETVTISSLRREKDDVVEVRDGYECGLTLTYNDIKEGDVIEAYELREKERV.

The interval 26-297 (SDQGEFVKSA…RGRKSKRAKR (272 aa)) is disordered. Residues 56 to 74 (KPAPAASNGAAAEAAAPPK) are compositionally biased toward low complexity. A compositionally biased stretch (pro residues) spans 100–120 (APEPPAAPAAPAAPAPKPSPA). The span at 121–131 (ARPAAAEAAAP) shows a compositional bias: low complexity. Composition is skewed to pro residues over residues 132-152 (APAPAPAPRPGATPGPKPGAP), 173-183 (PRPQAPRPGAP), and 192-218 (NMPPRPSPGSMGPRPPRPGGGPRPGGG). Residues 219 to 283 (PRPGGAGRPG…GAAGAFGRPG (65 aa)) show a composition bias toward gly residues. The span at 287–296 (KRGRKSKRAK) shows a compositional bias: basic residues. In terms of domain architecture, tr-type G spans 408-579 (TRPPVVTVMG…AVLLTADAAL (172 aa)). Residues 417 to 424 (GHVDHGKT) form a G1 region. Residue 417-424 (GHVDHGKT) coordinates GTP. The tract at residues 442–446 (GITQH) is G2. The segment at 467–470 (DTPG) is G3. Residues 467 to 471 (DTPGH) and 521 to 524 (NKID) each bind GTP. Positions 521-524 (NKID) are G4. Residues 557–559 (SAR) form a G5 region.

Belongs to the TRAFAC class translation factor GTPase superfamily. Classic translation factor GTPase family. IF-2 subfamily.

The protein resides in the cytoplasm. In terms of biological role, one of the essential components for the initiation of protein synthesis. Protects formylmethionyl-tRNA from spontaneous hydrolysis and promotes its binding to the 30S ribosomal subunits. Also involved in the hydrolysis of GTP during the formation of the 70S ribosomal complex. The sequence is that of Translation initiation factor IF-2 from Mycobacteroides abscessus (strain ATCC 19977 / DSM 44196 / CCUG 20993 / CIP 104536 / JCM 13569 / NCTC 13031 / TMC 1543 / L948) (Mycobacterium abscessus).